The following is a 383-amino-acid chain: Chromatin structure-remodeling complex subunit SFH1 (383 aa).

The interval 61–80 (DDDEKVHSDNGKGEGEEVGH) is disordered. Basic and acidic residues predominate over residues 64-80 (EKVHSDNGKGEGEEVGH).

This sequence belongs to the SNF5 family.

Its subcellular location is the nucleus. Its function is as follows. Part of the chromatin structure-remodeling complex (RSC) which is involved in transcription regulation and nucleosome positioning. RSC is responsible for the transfer of a histone octamer from a nucleosome core particle to naked DNA. The reaction requires ATP and involves an activated RSC-nucleosome intermediate. Remodeling reaction also involves DNA translocation, DNA twist and conformational change. As a reconfigurer of centromeric and flanking nucleosomes, RSC complex is required both for proper kinetochore function in chromosome segregation and, via a PKC1-dependent signaling pathway, for organization of the cellular cytoskeleton. This subunit is essential for mitotic growth and required for cell cycle progression. This Eremothecium gossypii (strain ATCC 10895 / CBS 109.51 / FGSC 9923 / NRRL Y-1056) (Yeast) protein is Chromatin structure-remodeling complex subunit SFH1 (SFH1).